The primary structure comprises 469 residues: UDP-N-acetylmuramate--L-alanine ligase (469 aa).

119 to 125 lines the ATP pocket; the sequence is GTHGKTT.

The protein belongs to the MurCDEF family.

It localises to the cytoplasm. The enzyme catalyses UDP-N-acetyl-alpha-D-muramate + L-alanine + ATP = UDP-N-acetyl-alpha-D-muramoyl-L-alanine + ADP + phosphate + H(+). The protein operates within cell wall biogenesis; peptidoglycan biosynthesis. Functionally, cell wall formation. The sequence is that of UDP-N-acetylmuramate--L-alanine ligase from Ruthia magnifica subsp. Calyptogena magnifica.